The chain runs to 299 residues: MSDLPDTDFTQRFIFDERDVRGEWVSLDDSYAAVLARHEYPQPVKALLGELMAATALLVGAMKFDGLLILQARSAGPIPLLMVECSSDCEIRGMARYEAEQIPADASLSQLMPDGHLTLTIDPVKGQRYQGTVDLDGANLSECFTNYFIQSQQLNTRFWLNAEGGKARGLLLQQLPRDRQPDDEEREDSWQHVVALAKTLKPEEWAEGNETLLHRLYHEDAVRLFDIQPLRFNCSCSRERSGNALVSLGEHDAKALVEECGGTVEIDCQFCNERYFFDASDVAQLFAGGGTDVASETRH.

2 cysteine pairs are disulfide-bonded: Cys-234–Cys-236 and Cys-268–Cys-271.

Belongs to the HSP33 family. In terms of processing, under oxidizing conditions two disulfide bonds are formed involving the reactive cysteines. Under reducing conditions zinc is bound to the reactive cysteines and the protein is inactive.

It is found in the cytoplasm. Functionally, redox regulated molecular chaperone. Protects both thermally unfolding and oxidatively damaged proteins from irreversible aggregation. Plays an important role in the bacterial defense system toward oxidative stress. This chain is 33 kDa chaperonin, found in Pseudomonas putida (strain GB-1).